The following is a 296-amino-acid chain: MSFFHANQREALNQSLAEVQGQINVSFEFFPPRTSEMEQTLWNSIDRLSSLKPKFVSVTYGANSGERDRTHSVIKGIKERTGLEAAPHLTCIDATRDELRTIARDYWNNGIRHIVALRGDLPPGSGKPEMYAADLVGLLKEVADFDISVAAYPEVHPEAKSAQADLLNLKRKVDAGANRAITQFFFDVESYLRFRDRCVSAGIDVEIIPGILPVSNFKQAKKFADMTNVRIPSWMSLMFEGLDNDAETRKLVGANIAMDMVKILSREGVKDFHFYTLNRAEMSYAICHTLGVRPGL.

Glutamate 28 acts as the Proton donor/acceptor in catalysis. Threonine 59 contributes to the NADH binding site. FAD is bound by residues tyrosine 60, alanine 62, histidine 88, arginine 118, glycine 119, aspartate 120, alanine 132, tyrosine 152, histidine 156, alanine 159, aspartate 165, asparagine 168, arginine 171, and lysine 172. A (6S)-5-methyl-5,6,7,8-tetrahydrofolate-binding site is contributed by aspartate 120. Glutamine 183 serves as a coordination point for NADH. Positions 183, 219, and 279 each coordinate (6S)-5-methyl-5,6,7,8-tetrahydrofolate.

It belongs to the methylenetetrahydrofolate reductase family. Requires FAD as cofactor.

It catalyses the reaction (6S)-5-methyl-5,6,7,8-tetrahydrofolate + NAD(+) = (6R)-5,10-methylene-5,6,7,8-tetrahydrofolate + NADH + H(+). Its pathway is one-carbon metabolism; tetrahydrofolate interconversion. It participates in amino-acid biosynthesis; L-methionine biosynthesis via de novo pathway. Functionally, catalyzes the NADH-dependent reduction of 5,10-methylenetetrahydrofolate to 5-methyltetrahydrofolate. Is required to provide the methyl group necessary for methionine synthetase to convert homocysteine to methionine; the methyl group is given by 5-methyltetrahydrofolate. The sequence is that of 5,10-methylenetetrahydrofolate reductase (metF) from Salmonella typhimurium (strain LT2 / SGSC1412 / ATCC 700720).